Consider the following 524-residue polypeptide: MLGLTLREISAALKQGQVSPIELCQRCLSRIKETKFLNAYITVTEERALKQAAESEKRYEKGQELGVLDGIPFSVKDNFSTAGIETTCASNMLKGYVPPYNATVVQKLLDQGAVLMGKTNLDEFAMGSGSTDGVFGPVRNPWSYSKQYRGKGSPDSSQEDQEPQWLVAGGSSGGSAAAVAAFTCFVALGSDTGGSTRNPAAHCGVVGLKPTYGLVSRHGLIPLVNSMDVPGILTRCVEDAAIILEVLAGHDPKDSTTVQDLVSPLALPSSVDISKLCIGIPKEYRAEGLSCETQAFWTRAADLFQSAGARVIEVSLPHTSYSIDCYHVLCTAEVASNMARFDGLEYGHRCNRDVSTEAMYAATRREGFNDVVRGRILSGNFFLLKENYNDYFIKAQKVRRLIANDFIHVFSSGVDVLLTPTTLSDAVPYLEFIKEDNSTRSAQDDVFTQAVNMAGLPAVTVPAARSKRGLPVGLQFIGRAFCEQQLLTVAKWFEQEVRFPALCLEDLTEAGLVAARHEKSVSVS.

The Charge relay system role is filled by Lys-76. Residues 146–168 form a disordered region; that stretch reads KQYRGKGSPDSSQEDQEPQWLVA. Ser-171 acts as the Charge relay system in catalysis. The Acyl-ester intermediate role is filled by Ser-195.

It belongs to the amidase family. GatA subfamily. In terms of assembly, subunit of the heterotrimeric GatCAB amidotransferase (AdT) complex, composed of A (QRSL1), B (GATB) and C (GATC) subunits.

It is found in the mitochondrion. The catalysed reaction is L-glutamyl-tRNA(Gln) + L-glutamine + ATP + H2O = L-glutaminyl-tRNA(Gln) + L-glutamate + ADP + phosphate + H(+). Functionally, allows the formation of correctly charged Gln-tRNA(Gln) through the transamidation of misacylated Glu-tRNA(Gln) in the mitochondria. The reaction takes place in the presence of glutamine and ATP through an activated gamma-phospho-Glu-tRNA(Gln). This Ornithorhynchus anatinus (Duckbill platypus) protein is Glutamyl-tRNA(Gln) amidotransferase subunit A, mitochondrial.